The sequence spans 205 residues: Small ribosomal subunit protein uS4 (205 aa).

The S4 RNA-binding domain occupies 93-171 (SRVSSVLYRS…SPHYLEVDRE (79 aa)).

This sequence belongs to the universal ribosomal protein uS4 family. In terms of assembly, part of the 30S ribosomal subunit. Contacts protein S5. The interaction surface between S4 and S5 is involved in control of translational fidelity.

Functionally, one of the primary rRNA binding proteins, it binds directly to 16S rRNA where it nucleates assembly of the body of the 30S subunit. Its function is as follows. With S5 and S12 plays an important role in translational accuracy. The polypeptide is Small ribosomal subunit protein uS4 (Neorickettsia sennetsu (strain ATCC VR-367 / Miyayama) (Ehrlichia sennetsu)).